Reading from the N-terminus, the 318-residue chain is Deoxyribose-phosphate aldolase (318 aa).

The Proton donor/acceptor role is filled by Asp-155. The active-site Schiff-base intermediate with acetaldehyde is Lys-218. Lys-254 acts as the Proton donor/acceptor in catalysis.

The protein belongs to the DeoC/FbaB aldolase family. DeoC type 2 subfamily. In terms of assembly, interacts with YBX1.

It localises to the cytoplasm. It is found in the cytoplasmic granule. The protein resides in the nucleus. It carries out the reaction 2-deoxy-D-ribose 5-phosphate = D-glyceraldehyde 3-phosphate + acetaldehyde. It participates in carbohydrate degradation; 2-deoxy-D-ribose 1-phosphate degradation; D-glyceraldehyde 3-phosphate and acetaldehyde from 2-deoxy-alpha-D-ribose 1-phosphate: step 2/2. In terms of biological role, catalyzes a reversible aldol reaction between acetaldehyde and D-glyceraldehyde 3-phosphate to generate 2-deoxy-D-ribose 5-phosphate. Participates in stress granule (SG) assembly. May allow ATP production from extracellular deoxyinosine in conditions of energy deprivation. This chain is Deoxyribose-phosphate aldolase (DERA), found in Bos taurus (Bovine).